Here is a 242-residue protein sequence, read N- to C-terminus: ATP synthase subunit a (242 aa).

6 helical membrane passes run 29-49 (SSIY…LAFY), 84-104 (FIPL…LGMT), 114-134 (IIVT…VGFV), 140-160 (FLTL…MIVI), 181-201 (MAGH…MIYL), and 203-223 (FLPI…AILQ).

Belongs to the ATPase A chain family. In terms of assembly, F-type ATPases have 2 components, CF(1) - the catalytic core - and CF(0) - the membrane proton channel. CF(1) has five subunits: alpha(3), beta(3), gamma(1), delta(1), epsilon(1). CF(0) has three main subunits: a(1), b(2) and c(9-12). The alpha and beta chains form an alternating ring which encloses part of the gamma chain. CF(1) is attached to CF(0) by a central stalk formed by the gamma and epsilon chains, while a peripheral stalk is formed by the delta and b chains.

It is found in the cell inner membrane. Its function is as follows. Key component of the proton channel; it plays a direct role in the translocation of protons across the membrane. The protein is ATP synthase subunit a of Rickettsia akari (strain Hartford).